We begin with the raw amino-acid sequence, 966 residues long: uncharacterized protein (966 aa).

Positions 1–24 are cleaved as a signal peptide; sequence MQGNLLKVLGVLAIVATLVCFIFA. The next 6 membrane-spanning stretches (helical) occupy residues 601 to 621, 711 to 731, 743 to 763, 785 to 805, 822 to 842, and 855 to 875; these read IKAI…LGFA, LGLS…IVII, AFMA…FLLF, VVMM…LDFV, FIGT…INWF, and GVNM…YGYV. The segment at 918 to 966 is disordered; it reads TRQGITGRAEARLKQRNKTLDQAEKNRKNTQKEGGEKTNEEPPKPETPK. Over residues 926–966 the composition is skewed to basic and acidic residues; that stretch reads AEARLKQRNKTLDQAEKNRKNTQKEGGEKTNEEPPKPETPK.

This sequence belongs to the TrbL/VirB6 family.

It is found in the cell membrane. This is an uncharacterized protein from Rickettsia conorii (strain ATCC VR-613 / Malish 7).